The following is a 250-amino-acid chain: 2,3-bisphosphoglycerate-dependent phosphoglycerate mutase (250 aa).

Residues 10–17 (RHGESQWN), 23–24 (TG), R62, 89–92 (ERHY), K100, 116–117 (RR), and 185–186 (GN) each bind substrate. The Tele-phosphohistidine intermediate role is filled by H11. E89 acts as the Proton donor/acceptor in catalysis.

The protein belongs to the phosphoglycerate mutase family. BPG-dependent PGAM subfamily. In terms of assembly, homodimer.

The enzyme catalyses (2R)-2-phosphoglycerate = (2R)-3-phosphoglycerate. It functions in the pathway carbohydrate degradation; glycolysis; pyruvate from D-glyceraldehyde 3-phosphate: step 3/5. Catalyzes the interconversion of 2-phosphoglycerate and 3-phosphoglycerate. The sequence is that of 2,3-bisphosphoglycerate-dependent phosphoglycerate mutase from Pectobacterium atrosepticum (strain SCRI 1043 / ATCC BAA-672) (Erwinia carotovora subsp. atroseptica).